The following is a 40-amino-acid chain: Photosystem II reaction center protein J (40 aa).

Residues 8-28 (IPLWVIGTVAGILVIGIIGIF) traverse the membrane as a helical segment.

It belongs to the PsbJ family. PSII is composed of 1 copy each of membrane proteins PsbA, PsbB, PsbC, PsbD, PsbE, PsbF, PsbH, PsbI, PsbJ, PsbK, PsbL, PsbM, PsbT, PsbX, PsbY, PsbZ, Psb30/Ycf12, at least 3 peripheral proteins of the oxygen-evolving complex and a large number of cofactors. It forms dimeric complexes.

The protein resides in the plastid. It localises to the chloroplast thylakoid membrane. In terms of biological role, one of the components of the core complex of photosystem II (PSII). PSII is a light-driven water:plastoquinone oxidoreductase that uses light energy to abstract electrons from H(2)O, generating O(2) and a proton gradient subsequently used for ATP formation. It consists of a core antenna complex that captures photons, and an electron transfer chain that converts photonic excitation into a charge separation. In Lobularia maritima (Sweet alyssum), this protein is Photosystem II reaction center protein J.